The primary structure comprises 303 residues: Dihydroorotate dehydrogenase B (NAD(+)), catalytic subunit (303 aa).

FMN is bound by residues serine 23 and 47 to 48 (KS). Substrate is bound by residues lysine 47, 71–75 (NAMGL), and asparagine 125. Asparagine 125 contributes to the FMN binding site. Cysteine 128 functions as the Nucleophile in the catalytic mechanism. Positions 163 and 189 each coordinate FMN. 190–191 (NT) serves as a coordination point for substrate. FMN-binding positions include glycine 215, 241–242 (GG), and 263–264 (GT).

It belongs to the dihydroorotate dehydrogenase family. Type 1 subfamily. In terms of assembly, heterotetramer of 2 PyrK and 2 PyrD type B subunits. FMN serves as cofactor.

The protein resides in the cytoplasm. The enzyme catalyses (S)-dihydroorotate + NAD(+) = orotate + NADH + H(+). The protein operates within pyrimidine metabolism; UMP biosynthesis via de novo pathway; orotate from (S)-dihydroorotate (NAD(+) route): step 1/1. Functionally, catalyzes the conversion of dihydroorotate to orotate with NAD(+) as electron acceptor. This is Dihydroorotate dehydrogenase B (NAD(+)), catalytic subunit (pyrD) from Pyrococcus horikoshii (strain ATCC 700860 / DSM 12428 / JCM 9974 / NBRC 100139 / OT-3).